Consider the following 244-residue polypeptide: 1-(5-phosphoribosyl)-5-[(5-phosphoribosylamino)methylideneamino] imidazole-4-carboxamide isomerase (244 aa).

Aspartate 12 serves as the catalytic Proton acceptor. Catalysis depends on aspartate 131, which acts as the Proton donor.

Belongs to the HisA/HisF family.

The protein localises to the cytoplasm. It carries out the reaction 1-(5-phospho-beta-D-ribosyl)-5-[(5-phospho-beta-D-ribosylamino)methylideneamino]imidazole-4-carboxamide = 5-[(5-phospho-1-deoxy-D-ribulos-1-ylimino)methylamino]-1-(5-phospho-beta-D-ribosyl)imidazole-4-carboxamide. It functions in the pathway amino-acid biosynthesis; L-histidine biosynthesis; L-histidine from 5-phospho-alpha-D-ribose 1-diphosphate: step 4/9. This is 1-(5-phosphoribosyl)-5-[(5-phosphoribosylamino)methylideneamino] imidazole-4-carboxamide isomerase from Nocardioides sp. (strain ATCC BAA-499 / JS614).